The chain runs to 102 residues: Small ribosomal subunit protein uS14 (102 aa).

This sequence belongs to the universal ribosomal protein uS14 family. Part of the 30S ribosomal subunit. Contacts proteins S3 and S10.

In terms of biological role, binds 16S rRNA, required for the assembly of 30S particles and may also be responsible for determining the conformation of the 16S rRNA at the A site. The polypeptide is Small ribosomal subunit protein uS14 (Wolbachia sp. subsp. Brugia malayi (strain TRS)).